Consider the following 164-residue polypeptide: Peptide deformylase (164 aa).

Cys87 and His129 together coordinate Fe cation. Residue Glu130 is part of the active site. Position 133 (His133) interacts with Fe cation.

This sequence belongs to the polypeptide deformylase family. It depends on Fe(2+) as a cofactor.

The catalysed reaction is N-terminal N-formyl-L-methionyl-[peptide] + H2O = N-terminal L-methionyl-[peptide] + formate. In terms of biological role, removes the formyl group from the N-terminal Met of newly synthesized proteins. Requires at least a dipeptide for an efficient rate of reaction. N-terminal L-methionine is a prerequisite for activity but the enzyme has broad specificity at other positions. The chain is Peptide deformylase from Thermotoga petrophila (strain ATCC BAA-488 / DSM 13995 / JCM 10881 / RKU-1).